The primary structure comprises 272 residues: Iodotyrosine deiodinase (272 aa).

Residues 5-25 traverse the membrane as a helical segment; it reads LSGVSYGLLAGILAMLIHLVY. FMN is bound by residues 82–86, Ser-110, and 110–111; these read RRSVR and SG. 3-iodo-L-tyrosine-binding residues include Ala-112, Glu-139, Tyr-143, and Lys-164. FMN is bound by residues 219 to 221 and Arg-261; that span reads TST.

It belongs to the nitroreductase family. The cofactor is FMN.

It is found in the membrane. The enzyme catalyses 2 iodide + L-tyrosine + 2 NADP(+) = 3,5-diiodo-L-tyrosine + 2 NADPH + H(+). It catalyses the reaction iodide + L-tyrosine + NADP(+) = 3-iodo-L-tyrosine + NADPH. It carries out the reaction 3-iodo-L-tyrosine + iodide + NADP(+) = 3,5-diiodo-L-tyrosine + NADPH + H(+). The catalysed reaction is L-tyrosine + chloride + NADP(+) = 3-chloro-L-tyrosine + NADPH. The enzyme catalyses bromide + L-tyrosine + NADP(+) = 3-bromo-L-tyrosine + NADPH. Functionally, catalyzes the dehalogenation of halotyrosines such as 3,5-diiodo-L-tyrosine. Likely to also catalyze the dehalogenation of other halotyrosines such as 3-bromo-L-tyrosine, 3-chloro-L-tyrosine and 3-iodo-L-tyrosine. This chain is Iodotyrosine deiodinase, found in Hydra vulgaris (Hydra).